The primary structure comprises 323 residues: Phospho-N-acetylmuramoyl-pentapeptide-transferase (323 aa).

The next 9 membrane-spanning stretches (helical) occupy residues 3 to 23, 52 to 72, 77 to 97, 121 to 141, 145 to 165, 175 to 195, 200 to 220, 226 to 248, and 301 to 321; these read NILL…PALI, MGGL…SWVL, MLPT…LGMW, IVGA…MALH, IGNW…LVGF, LDGL…IVAW, INIA…LIFN, IFMG…ILLH, and IDLT…WVIL.

It belongs to the glycosyltransferase 4 family. MraY subfamily. Mg(2+) is required as a cofactor.

The protein resides in the cell membrane. The catalysed reaction is UDP-N-acetyl-alpha-D-muramoyl-L-alanyl-gamma-D-glutamyl-L-lysyl-D-alanyl-D-alanine + di-trans,octa-cis-undecaprenyl phosphate = Mur2Ac(oyl-L-Ala-gamma-D-Glu-L-Lys-D-Ala-D-Ala)-di-trans,octa-cis-undecaprenyl diphosphate + UMP. It functions in the pathway cell wall biogenesis; peptidoglycan biosynthesis. Functionally, catalyzes the initial step of the lipid cycle reactions in the biosynthesis of the cell wall peptidoglycan: transfers peptidoglycan precursor phospho-MurNAc-pentapeptide from UDP-MurNAc-pentapeptide onto the lipid carrier undecaprenyl phosphate, yielding undecaprenyl-pyrophosphoryl-MurNAc-pentapeptide, known as lipid I. This chain is Phospho-N-acetylmuramoyl-pentapeptide-transferase, found in Levilactobacillus brevis (strain ATCC 367 / BCRC 12310 / CIP 105137 / JCM 1170 / LMG 11437 / NCIMB 947 / NCTC 947) (Lactobacillus brevis).